The following is a 175-amino-acid chain: Large ribosomal subunit protein uL10 (175 aa).

It belongs to the universal ribosomal protein uL10 family. As to quaternary structure, part of the ribosomal stalk of the 50S ribosomal subunit. The N-terminus interacts with L11 and the large rRNA to form the base of the stalk. The C-terminus forms an elongated spine to which L12 dimers bind in a sequential fashion forming a multimeric L10(L12)X complex.

Its function is as follows. Forms part of the ribosomal stalk, playing a central role in the interaction of the ribosome with GTP-bound translation factors. In Prochlorococcus marinus (strain AS9601), this protein is Large ribosomal subunit protein uL10.